Here is a 221-residue protein sequence, read N- to C-terminus: uncharacterized protein (221 aa).

The first 23 residues, 1 to 23, serve as a signal peptide directing secretion; it reads MNKLIQLALFFTLMLTGCSNSST. Residues 67–221 are disordered; the sequence is ELGKRKAKEE…QGYIDPEDAP (155 aa). Basic and acidic residues predominate over residues 68–150; sequence LGKRKAKEEA…EQKANAEKKR (83 aa). Residues 70–161 are a coiled coil; sequence KRKAKEEAEK…SQAQRQQTEA (92 aa). Polar residues predominate over residues 152-161; that stretch reads SQAQRQQTEA. The span at 162 to 174 shows a compositional bias: low complexity; the sequence is PSSNSQDPPSSSS. A compositionally biased stretch (polar residues) spans 175–184; sequence QTDKTIQQPA. Positions 195–205 are enriched in basic and acidic residues; that stretch reads YEERKKWHDDQ.

This is an uncharacterized protein from Bacillus subtilis (strain 168).